The primary structure comprises 243 residues: Ribosomal RNA small subunit methyltransferase J (243 aa).

Residues 112–113 and D164 contribute to the S-adenosyl-L-methionine site; that span reads ER.

Belongs to the methyltransferase superfamily. RsmJ family.

Its subcellular location is the cytoplasm. The enzyme catalyses guanosine(1516) in 16S rRNA + S-adenosyl-L-methionine = N(2)-methylguanosine(1516) in 16S rRNA + S-adenosyl-L-homocysteine + H(+). Functionally, specifically methylates the guanosine in position 1516 of 16S rRNA. The protein is Ribosomal RNA small subunit methyltransferase J of Legionella pneumophila subsp. pneumophila (strain Philadelphia 1 / ATCC 33152 / DSM 7513).